The primary structure comprises 295 residues: Elongation factor Ts (295 aa).

The segment at 79–82 (TDFV) is involved in Mg(2+) ion dislocation from EF-Tu.

Belongs to the EF-Ts family.

Its subcellular location is the cytoplasm. Associates with the EF-Tu.GDP complex and induces the exchange of GDP to GTP. It remains bound to the aminoacyl-tRNA.EF-Tu.GTP complex up to the GTP hydrolysis stage on the ribosome. This is Elongation factor Ts from Bacillus cereus (strain B4264).